Consider the following 203-residue polypeptide: MIKGYEEEEWIPKTRLGRLVYEGQVTTFEEAVRSGLPIKEHQIIDLLLPGLEDEVLDITMVQRMTDSGRRVKFRTTVIVGNRDGYIGIGHGKDVQVGGAIKKGIENAKLNVVRINRGCGSWECGCGQAHTVPYKVSGSSGSVRIYLMPAPRGLGLAAGDVAKKVMEMAGIKDVWTRTEGSTRTTLNFAKATYNALLNTITVRS.

The 64-residue stretch at 51 to 114 (LEDEVLDITM…ENAKLNVVRI (64 aa)) folds into the S5 DRBM domain.

Belongs to the universal ribosomal protein uS5 family. Part of the 30S ribosomal subunit. Contacts protein S4.

Functionally, with S4 and S12 plays an important role in translational accuracy. The sequence is that of Small ribosomal subunit protein uS5 from Methanothrix thermoacetophila (strain DSM 6194 / JCM 14653 / NBRC 101360 / PT) (Methanosaeta thermophila).